Here is a 490-residue protein sequence, read N- to C-terminus: Patellin-3 (490 aa).

Over residues 1–17 (MAEEPTTTTLVTPEKLP) the composition is skewed to low complexity. Residues 1-121 (MAEEPTTTTL…ESSKLSDLSN (121 aa)) are disordered. A2 carries the post-translational modification N-acetylalanine. The span at 19–33 (PSLTPSEVSESTQDA) shows a compositional bias: polar residues. Over residues 46–56 (ETNPPETADTT) the composition is skewed to low complexity. 2 stretches are compositionally biased toward basic and acidic residues: residues 57 to 69 (TKPEEETAAEHHP) and 79 to 100 (STEKQEVKDEASQKEVAEEKKS). The residue at position 108 (S108) is a Phosphoserine. A compositionally biased stretch (basic and acidic residues) spans 109–121 (FKEESSKLSDLSN). K193 participates in a covalent cross-link: Glycyl lysine isopeptide (Lys-Gly) (interchain with G-Cter in ubiquitin). The CRAL-TRIO domain maps to 202 to 377 (EEDLVDDLDK…QYGGLSVDPC (176 aa)). The region spanning 353–487 (AETLFKYISP…KKKLVYRFNV (135 aa)) is the GOLD domain.

The protein belongs to the patellin family.

The protein localises to the membrane. The protein resides in the cytoplasm. Its function is as follows. Carrier protein that may be involved in membrane-trafficking events associated with cell plate formation during cytokinesis. Binds to some hydrophobic molecules such as phosphoinositides and promotes their transfer between the different cellular sites. In Arabidopsis thaliana (Mouse-ear cress), this protein is Patellin-3 (PATL3).